The primary structure comprises 324 residues: Annexin A3 (324 aa).

Annexin repeat units follow at residues 19-90 (FNPS…ALIT), 91-162 (APAV…TLAD), 174-246 (HLAK…AVVR), and 250-321 (NTPA…KICG). An N6-acetyllysine modification is found at Lys-178. Phosphothreonine is present on Thr-268.

It belongs to the annexin family.

In terms of biological role, inhibitor of phospholipase A2, also possesses anti-coagulant properties. This chain is Annexin A3 (Anxa3), found in Rattus norvegicus (Rat).